The sequence spans 98 residues: MPSTYINILLAFTMALLGLLLYRSHMMSSLLCLEGLMLALFILSTLMALNTHHTLSAVLPIVLMVFAACEAALGLALLVMVSNTYGLDYVQNLNLLQC.

3 helical membrane passes run 1 to 21 (MPST…GLLL), 29 to 49 (SLLC…LMAL), and 61 to 81 (IVLM…LVMV).

This sequence belongs to the complex I subunit 4L family. As to quaternary structure, core subunit of respiratory chain NADH dehydrogenase (Complex I) which is composed of 45 different subunits.

The protein localises to the mitochondrion inner membrane. The catalysed reaction is a ubiquinone + NADH + 5 H(+)(in) = a ubiquinol + NAD(+) + 4 H(+)(out). Functionally, core subunit of the mitochondrial membrane respiratory chain NADH dehydrogenase (Complex I) which catalyzes electron transfer from NADH through the respiratory chain, using ubiquinone as an electron acceptor. Part of the enzyme membrane arm which is embedded in the lipid bilayer and involved in proton translocation. This Choloepus didactylus (Southern two-toed sloth) protein is NADH-ubiquinone oxidoreductase chain 4L (MT-ND4L).